Consider the following 365-residue polypeptide: Peptide chain release factor 1 (365 aa).

An N5-methylglutamine modification is found at glutamine 240.

Belongs to the prokaryotic/mitochondrial release factor family. In terms of processing, methylated by PrmC. Methylation increases the termination efficiency of RF1.

The protein resides in the cytoplasm. Peptide chain release factor 1 directs the termination of translation in response to the peptide chain termination codons UAG and UAA. The chain is Peptide chain release factor 1 from Bifidobacterium animalis subsp. lactis (strain AD011).